The sequence spans 96 residues: Beta-defensin 20 (96 aa).

The first 21 residues, 1–21 (MKLLQVLLVLLFVALADGAQP), serve as a signal peptide directing secretion. Disulfide bonds link Cys-24-Cys-52, Cys-32-Cys-46, and Cys-36-Cys-53.

The protein belongs to the beta-defensin family.

Its subcellular location is the secreted. Functionally, has antibacterial activity. In Mus musculus (Mouse), this protein is Beta-defensin 20 (Defb20).